Here is a 59-residue protein sequence, read N- to C-terminus: Phycobilisome degradation protein NblA (59 aa).

It to chloroplast ycf18.

Functionally, involved in phycobilisome (PBS) degradation during nutrient deprivation. May mark the PBS for degradation by covalent association with PBS components or may disrupt the PBS via ionic interactions. In Synechococcus elongatus (strain ATCC 33912 / PCC 7942 / FACHB-805) (Anacystis nidulans R2), this protein is Phycobilisome degradation protein NblA.